A 438-amino-acid polypeptide reads, in one-letter code: MAAGLRKRGRSGSAAQAEGLCKQWLQRAWQERRLLLREPRYTLLVAACLCLAEVGITFWVIHRVAYTEIDWKAYMAEVEGVINGTYDYTQLQGDTGPLVYPAGFVYIFMGLYYATSRGTDIRMAQNIFAVLYLATLLLVFLIYHQTCKVPPFVFFFMCCASYRVHSIFVLRLFNDPVAMVLLFLSINLLLAQRWGWGCCFFSLAVSVKMNVLLFAPGLLFLLLTQFGFRGALPKLGICAGLQVVLGLPFLLENPSGYLSRSFDLGRQFLFHWTVNWRFLPEALFLHRAFHLALLTAHLTLLLLFALCRWHRTGESILSLLRDPSKRKVPPQPLTPNQIVSTLFTSNFIGICFSRSLHYQFYVWYFHTLPYLLWAMPARWLTHLLRLLVLGLIELSWNTYPSTSCSSAALHICHAVILLQLWLGPQPFPKSTQHSKKAH.

Ser-13 bears the Phosphoserine mark. 11 helical membrane-spanning segments follow: residues 41-61, 95-115, 123-143, 149-169, 172-192, 203-223, 231-251, 289-309, 332-352, 356-376, and 407-427; these read YTLL…FWVI, TGPL…YYAT, MAQN…FLIY, VPPF…SIFV, LFND…LLAQ, LAVS…FLLL, ALPK…PFLL, FHLA…LCRW, PLTP…GICF, LHYQ…WAMP, and AALH…PQPF.

Belongs to the glycosyltransferase ALG3 family.

It is found in the endoplasmic reticulum membrane. The enzyme catalyses an alpha-D-Man-(1-&gt;2)-alpha-D-Man-(1-&gt;2)-alpha-D-Man-(1-&gt;3)-[alpha-D-Man-(1-&gt;6)]-beta-D-Man-(1-&gt;4)-beta-D-GlcNAc-(1-&gt;4)-alpha-D-GlcNAc-diphospho-di-trans,poly-cis-dolichol + a di-trans,poly-cis-dolichyl beta-D-mannosyl phosphate = an alpha-D-Man-(1-&gt;2)-alpha-D-Man-(1-&gt;2)-alpha-D-Man-(1-&gt;3)-[alpha-D-Man-(1-&gt;3)-alpha-D-Man-(1-&gt;6)]-beta-D-Man-(1-&gt;4)-beta-D-GlcNAc-(1-&gt;4)-alpha-D-GlcNAc-diphospho-di-trans,poly-cis-dolichol + a di-trans,poly-cis-dolichyl phosphate + H(+). The protein operates within protein modification; protein glycosylation. In terms of biological role, dol-P-Man:Man(5)GlcNAc(2)-PP-Dol alpha-1,3-mannosyltransferase that operates in the biosynthetic pathway of dolichol-linked oligosaccharides, the glycan precursors employed in protein asparagine (N)-glycosylation. The assembly of dolichol-linked oligosaccharides begins on the cytosolic side of the endoplasmic reticulum membrane and finishes in its lumen. The sequential addition of sugars to dolichol pyrophosphate produces dolichol-linked oligosaccharides containing fourteen sugars, including two GlcNAcs, nine mannoses and three glucoses. Once assembled, the oligosaccharide is transferred from the lipid to nascent proteins by oligosaccharyltransferases. In the lumen of the endoplasmic reticulum, adds the first dolichyl beta-D-mannosyl phosphate derived mannose in an alpha-1,3 linkage to Man(5)GlcNAc(2)-PP-dolichol to produce Man(6)GlcNAc(2)-PP-dolichol. Man(6)GlcNAc(2)-PP-dolichol is a substrate for ALG9, the following enzyme in the biosynthetic pathway. This is Dol-P-Man:Man(5)GlcNAc(2)-PP-Dol alpha-1,3-mannosyltransferase from Homo sapiens (Human).